The sequence spans 696 residues: Elongation factor G (696 aa).

Residues 8 to 282 (KDYRNIGIMA…AVVDYLPSPL (275 aa)) form the tr-type G domain. GTP is bound by residues 17–24 (AHIDAGKT), 81–85 (DTPGH), and 135–138 (NKMD).

Belongs to the TRAFAC class translation factor GTPase superfamily. Classic translation factor GTPase family. EF-G/EF-2 subfamily.

It is found in the cytoplasm. Catalyzes the GTP-dependent ribosomal translocation step during translation elongation. During this step, the ribosome changes from the pre-translocational (PRE) to the post-translocational (POST) state as the newly formed A-site-bound peptidyl-tRNA and P-site-bound deacylated tRNA move to the P and E sites, respectively. Catalyzes the coordinated movement of the two tRNA molecules, the mRNA and conformational changes in the ribosome. This is Elongation factor G from Mycoplasmopsis synoviae (strain 53) (Mycoplasma synoviae).